The primary structure comprises 72 residues: MSQSVKRTAADKPLAPCPICGKPARTETKPFCSPRCADIDLGRWLGERYVIPGPEEDEMSYPPHSNDGNRSR.

The Zn(2+) site is built by cysteine 17, cysteine 20, cysteine 32, and cysteine 36. The tract at residues 52–72 (PGPEEDEMSYPPHSNDGNRSR) is disordered.

The protein belongs to the DNA gyrase inhibitor YacG family. As to quaternary structure, interacts with GyrB. Zn(2+) is required as a cofactor.

Functionally, inhibits all the catalytic activities of DNA gyrase by preventing its interaction with DNA. Acts by binding directly to the C-terminal domain of GyrB, which probably disrupts DNA binding by the gyrase. The chain is DNA gyrase inhibitor YacG from Methylorubrum extorquens (strain CM4 / NCIMB 13688) (Methylobacterium extorquens).